We begin with the raw amino-acid sequence, 468 residues long: MGRVSSLALALLLPAVQAQQTLWGQCGGIGWTGPTNCVAGAACSTQNPYYAQCLPGTATTSTTLTTTTRVTTTTTSTTSKSSSTGSTTTTKSTGTTTTSGSSTTITSAPSGNPFSGYQLYANPYYSSEVHTLAMPSLASSLLPAASAAAKVPSFTWLDTAAKVPTMGTYLADIKAKNAAGANPPIAAQFVVYDLPDRDCAALASNGEYSIANGGVANYKKYIDAIRAQLLNYPDVHTILVIEPDSLANLVTNLNVAKCANAQSAYLECVNYALIQLNLPNVAMYIDAGHAGWLGWPANIGPAAQLFAGVYKDAGAPAALRGLATNVANYNAFSISTCPSYTSGDANCDENRYINAIAPLLKDQGWDAHFIVDTGRNGVQPTKQNAWGDWCNVIGTGFGVRPTTNTGNSLVDAFVWVKPGGESDGTSDSSSARYDAHCGYSDALQPAPEAGTWFQAYFEQLLKNANPAF.

The N-terminal stretch at 1-18 (MGRVSSLALALLLPAVQA) is a signal peptide. The CBM1 domain occupies 19-54 (QQTLWGQCGGIGWTGPTNCVAGAACSTQNPYYAQCL). Intrachain disulfides connect cysteine 26-cysteine 43 and cysteine 37-cysteine 53. Residues 57-106 (TATTSTTLTTTTRVTTTTTSTTSKSSSTGSTTTTKSTGTTTTSGSSTTIT) are thr-rich linker. Residues 68–107 (TRVTTTTTSTTSKSSSTGSTTTTKSTGTTTTSGSSTTITS) are disordered. Residues 107-468 (SAPSGNPFSG…QLLKNANPAF (362 aa)) form a catalytic region. The active site involves aspartate 198. 2 disulfide bridges follow: cysteine 199–cysteine 258 and cysteine 390–cysteine 437. Aspartate 244 functions as the Proton donor in the catalytic mechanism. Aspartate 423 serves as the catalytic Nucleophile.

The protein belongs to the glycosyl hydrolase 6 (cellulase B) family.

Its subcellular location is the secreted. The enzyme catalyses Hydrolysis of (1-&gt;4)-beta-D-glucosidic linkages in cellulose and cellotetraose, releasing cellobiose from the non-reducing ends of the chains.. In terms of biological role, the biological conversion of cellulose to glucose generally requires three types of hydrolytic enzymes: (1) Endoglucanases which cut internal beta-1,4-glucosidic bonds; (2) Exocellobiohydrolases that cut the disaccharide cellobiose from the non-reducing end of the cellulose polymer chain; (3) Beta-1,4-glucosidases which hydrolyze the cellobiose and other short cello-oligosaccharides to glucose. This chain is Probable 1,4-beta-D-glucan cellobiohydrolase C (cbhC), found in Aspergillus terreus (strain NIH 2624 / FGSC A1156).